Consider the following 281-residue polypeptide: N-acetylmuramic acid 6-phosphate etherase (281 aa).

Residues 63–226 form the SIS domain; it reads IVPRMKQGGR…TTSVMIQLGR (164 aa). Glu-91 acts as the Proton donor in catalysis. Residue Glu-122 is part of the active site.

The protein belongs to the GCKR-like family. MurNAc-6-P etherase subfamily. Homodimer.

The enzyme catalyses N-acetyl-D-muramate 6-phosphate + H2O = N-acetyl-D-glucosamine 6-phosphate + (R)-lactate. Its pathway is amino-sugar metabolism; N-acetylmuramate degradation. Functionally, specifically catalyzes the cleavage of the D-lactyl ether substituent of MurNAc 6-phosphate, producing GlcNAc 6-phosphate and D-lactate. In Bacteroides fragilis (strain YCH46), this protein is N-acetylmuramic acid 6-phosphate etherase.